A 431-amino-acid chain; its full sequence is Divergent protein kinase domain 1B (431 aa).

Residues Met-1–Lys-30 are Cytoplasmic-facing. The May mediate ER retention signature appears at Arg-5–Arg-6. Residues Tyr-31 to Ser-51 traverse the membrane as a helical segment. Residues Ser-52 to Ser-431 are Lumenal-facing. Cystine bridges form between Cys-57-Cys-94 and Cys-62-Cys-117.

The protein belongs to the DIPK family. Among the many cysteines in the lumenal domain, most are probably involved in disulfide bonds.

The protein resides in the endoplasmic reticulum membrane. In Rattus norvegicus (Rat), this protein is Divergent protein kinase domain 1B.